The following is a 2514-amino-acid chain: Nuclear receptor corepressor 2 (2514 aa).

The span at 1–13 shows a compositional bias: polar residues; that stretch reads MSGSTQPVAQTWR. The tract at residues 1-24 is disordered; the sequence is MSGSTQPVAQTWRATEPRYPPHSL. Arginine 18 carries the post-translational modification Asymmetric dimethylarginine. Serine 54, serine 67, serine 149, and serine 152 each carry phosphoserine. Disordered stretches follow at residues 120–162 and 190–220; these read PSPL…ELEL and ISKLKKKQQQLEEEAAKPPEPEKPVSPPPIE. Threonine 156 is modified (phosphothreonine). Positions 174 to 215 form a coiled coil; that stretch reads QNMDRVDREITMVEQQISKLKKKQQQLEEEAAKPPEPEKPVS. Over residues 203–212 the composition is skewed to basic and acidic residues; the sequence is EAAKPPEPEK. Serine 215 is modified (phosphoserine). The interaction with SIN3A/B stretch occupies residues 254–312; it reads LPLYNQPSDTRQYHENIKINQAMRKKLILYFKRRNHARKQWEQKFCQRYDQLMEAWEKK. The interval 389–480 is deacetylase activation domain (DAD); the sequence is MRQLAVIPPM…YLTKKNENYK (92 aa). The SANT 1 domain occupies 427–478; sequence QVMNMWSEQEKETFREKFMQHPKNFGLIASFLERKTVAECVLYYYLTKKNEN. 1D-myo-inositol 1,4,5,6-tetrakisphosphate-binding residues include lysine 449, tyrosine 470, and tyrosine 471. Disordered stretches follow at residues 487–622, 674–1081, and 1165–1186; these read YRRR…EMET, EKER…APPG, and SGVKQEQLSPRGQAGPPESLGV. Serine 493 carries the phosphoserine modification. Over residues 494-510 the composition is skewed to low complexity; sequence QQQQQQQQQQQQQQQQQ. Basic and acidic residues predominate over residues 516-552; that stretch reads SQEEKDEKEKEKEAEKEEEKPEVENDKEDLLKEKTDD. Residues 522–561 are a coiled coil; that stretch reads EKEKEKEAEKEEEKPEVENDKEDLLKEKTDDTSGEDNDEK. Phosphothreonine is present on threonine 553. Serine 554 is modified (phosphoserine). 2 stretches are compositionally biased toward polar residues: residues 597-613 and 740-753; these read TPQQSAELASMELNESS and ATVNNSSDTESIPS. The region spanning 610–661 is the SANT 2 domain; the sequence is NESSRWTEEEMETAKKGLLEHGRNWSAIARMVGSKTVSQCKNFYFNYKKRQN. Residues serine 750 and serine 753 each carry the phosphoserine modification. Composition is skewed to pro residues over residues 777–796 and 806–822; these read GPPPGPPTPPPEDIPAPTEP and PTPPPAPPSPSAPPPVV. A compositionally biased stretch (basic and acidic residues) spans 856-866; the sequence is GKAEEPVKSEC. Lysine 878 bears the N6-acetyllysine mark. Residues 902–921 are compositionally biased toward polar residues; it reads RATTAKSSGAPQDSDSSATC. Residues 937–948 show a composition bias toward low complexity; it reads LLSPRPSLLTPT. Serine 939 bears the Phosphoserine mark. Position 946 is a phosphothreonine (threonine 946). Residue serine 956 is modified to Phosphoserine. Residue lysine 959 is modified to N6-acetyllysine. Residues 980 to 990 show a composition bias toward basic and acidic residues; that stretch reads KVHEPPREDAA. Residues 993-1004 show a composition bias toward pro residues; the sequence is KPAPPAPPPPQN. Over residues 1005–1014 the composition is skewed to polar residues; it reads LQPESDAPQQ. Lysine 1168 participates in a covalent cross-link: Glycyl lysine isopeptide (Lys-Gly) (interchain with G-Cter in SUMO2). Serine 1173 is modified (phosphoserine). 2 positions are modified to N6-acetyllysine: lysine 1210 and lysine 1240. Phosphoserine is present on serine 1251. Residues 1287–1307 are disordered; the sequence is TQCSKEDGRSSSGPPHETAAP. Serine 1323 carries the post-translational modification Phosphoserine. Position 1383 is a phosphothreonine (threonine 1383). 2 disordered regions span residues 1440–1482 and 1506–1609; these read PLAP…SPGR and ESLK…HPIS. Serine 1479 bears the Phosphoserine mark. Low complexity predominate over residues 1513-1526; it reads GTASSSGGSIARGA. A phosphoserine mark is found at serine 1539, serine 1595, and serine 1619. Arginine 1653 carries the post-translational modification Asymmetric dimethylarginine. Disordered stretches follow at residues 1763 to 1867 and 1937 to 2124; these read TAPQ…TQDA and KEAP…PGVK. The segment covering 1766 to 1782 has biased composition (low complexity); that stretch reads QPFSSRHSSSPLSPGGP. Phosphoserine occurs at positions 1775 and 1778. Residues 1794–1813 show a composition bias toward basic and acidic residues; that stretch reads SERERDRDRERDRDREREKS. Serine 1861 carries the post-translational modification Phosphoserine. A compositionally biased stretch (basic and acidic residues) spans 1938–1952; sequence EAPRVARPERPRADT. At lysine 1959 the chain carries N6-acetyllysine. The residue at position 2005 (serine 2005) is a Phosphoserine. N6-acetyllysine is present on lysine 2026. Over residues 2043–2060 the composition is skewed to low complexity; it reads SSYSPEGVEPVSPVSSPS. Residues serine 2046, serine 2054, serine 2057, serine 2058, and serine 2060 each carry the phosphoserine modification. A Phosphothreonine modification is found at threonine 2062. Positions 2062 to 2085 are enriched in basic and acidic residues; that stretch reads THDKGLPKHLEELDKSHLEGELRP. Serine 2077 carries the post-translational modification Phosphoserine. Residues 2106–2117 show a composition bias toward low complexity; it reads LPESQPSSSPLL. The required for interaction with RARA in the absence of its ligand stretch occupies residues 2128–2131; that stretch reads RVVT. Residues 2136–2140 carry the CORNR box of ID1 motif; sequence ISEVI. 2 disordered regions span residues 2174–2235 and 2248–2269; these read RRPP…GHSR and QTEPSRMGSKSPGNTSQPPAFF. Phosphoserine is present on residues serine 2203, serine 2223, and serine 2258. The CORNR box of ID2 signature appears at 2339 to 2343; the sequence is LEAII. Residues 2384–2500 form a disordered region; it reads DGRSDHTLTS…PHHAWDEEPK (117 aa). At serine 2413 the chain carries Phosphoserine. Low complexity predominate over residues 2482 to 2492; the sequence is PAGSGPLAGPH.

Belongs to the N-CoR nuclear receptor corepressors family. Forms a large corepressor complex that contains SIN3A/B and histone deacetylases HDAC1 and HDAC2. This complex associates with the thyroid (TR) and the retinoid acid receptors (RAR) in the absence of ligand, and may stabilize their interaction with TFIIB. Interacts directly with RARA in the absence of ligand; the interaction represses RARA activity. Interacts (isoform SMRT) with HDAC10. Interacts with MINT. Component of the N-Cor repressor complex, at least composed of NCOR1, NCOR2, HDAC3, TBL1X, TBL1R, CORO2A and GPS2. Interacts with CBFA2T3 and ATXN1L. Interacts with RARB; the interaction is weak and does not repress RARB transactivational activity. Interacts (via 1D-myo-inositol 1,4,5,6-tetrakisphosphate) with HDAC3; promoting the histone deacetylase activity of HDAC3. Interacts with HDAC7 and C1D. Interacts with NR4A2; this interaction increases in the absence of PITX3. Interacts with BCL6 (via the BTB domain), required for BCL6 transcriptional repressor activity on a subset of target genes. Forms ternary complexes with BCOR and BCL6 on target gene promoters but, on enhancer elements, interacts with BCL6 and HDAC3 to repress proximal gene expression. May interact with DEAF1. Interacts with RXRA. Interacts with MECP2. Interacts with ZBTB7A. Interacts with AR. Interacts with TBL1Y. Interacts with SANBR (via the BTB domain). As to expression, ubiquitous. High levels of expression are detected in lung, spleen and brain.

It localises to the nucleus. Transcriptional corepressor that mediates the transcriptional repression activity of some nuclear receptors by promoting chromatin condensation, thus preventing access of the basal transcription. Acts by recruiting chromatin modifiers, such as histone deacetylases HDAC1, HDAC2 and HDAC3. Required to activate the histone deacetylase activity of HDAC3. Involved in the regulation BCL6-dependent of the germinal center (GC) reactions, mainly through the control of the GC B-cells proliferation and survival. Recruited by ZBTB7A to the androgen response elements/ARE on target genes, negatively regulates androgen receptor signaling and androgen-induced cell proliferation. Functionally, isoform 1 and isoform 4 have different affinities for different nuclear receptors. The sequence is that of Nuclear receptor corepressor 2 from Homo sapiens (Human).